The chain runs to 303 residues: MYIQVLGSAAGGGFPQWNCNCVNCKGYRDGTLKATARTQSSIALSDDGVHWILCNASPDIRAQLQAFAPMQPARALRDTGINAIVLLDSQIDHTTGLLSLREGCPHQVWCTDMVHQDLTTGFPLFNMLSHWNGGLQWNRIELEGSFVIDACPNLKFTPFPLRSAAPPYSPHRFDPHPGDNLGLMVEDTRTGGKLFYAPGLGQVDEKLLAMMHGADCLLVDGTLWEDDEMQRRGVGTRTGREMGHLAQNGPGGMLEVLDGFPRQRKVLIHINNTNPILDENSPERAEVLRRGVEVAFDGMSIEL.

Belongs to the PqqB family.

It participates in cofactor biosynthesis; pyrroloquinoline quinone biosynthesis. Its function is as follows. May be involved in the transport of PQQ or its precursor to the periplasm. The chain is Coenzyme PQQ synthesis protein B from Pseudomonas putida (strain ATCC 47054 / DSM 6125 / CFBP 8728 / NCIMB 11950 / KT2440).